We begin with the raw amino-acid sequence, 286 residues long: ATP synthase gamma chain (286 aa).

It belongs to the ATPase gamma chain family. In terms of assembly, F-type ATPases have 2 components, CF(1) - the catalytic core - and CF(0) - the membrane proton channel. CF(1) has five subunits: alpha(3), beta(3), gamma(1), delta(1), epsilon(1). CF(0) has three main subunits: a, b and c.

The protein localises to the cell inner membrane. Functionally, produces ATP from ADP in the presence of a proton gradient across the membrane. The gamma chain is believed to be important in regulating ATPase activity and the flow of protons through the CF(0) complex. This Shewanella baltica (strain OS223) protein is ATP synthase gamma chain.